The primary structure comprises 187 residues: UPF0340 protein SP_0663 (187 aa).

The protein belongs to the UPF0340 family.

This Streptococcus pneumoniae serotype 4 (strain ATCC BAA-334 / TIGR4) protein is UPF0340 protein SP_0663.